We begin with the raw amino-acid sequence, 196 residues long: SERTA domain-containing protein 3 (196 aa).

Positions 1 to 21 (MVGGLKRKHSDLEEEEERWEW) are disordered. The 48-residue stretch at 26–73 (LQSYQQALLRISLDKVQRSLGPRAPSLRRHVLIHNTLQQLQAALRLAP) folds into the SERTA domain. The interval 104–125 (TSMDGTEPPQNPVTPLGLQNEV) is disordered.

As to quaternary structure, interacts with RPA2. (Microbial infection) Interacts with influenza virus PA, PB1 and PB2,leading to inhibition of RdRp complex assembly. In terms of assembly, (Microbial infection) Interacts with zika virus capsid protein.

The protein resides in the nucleus. Antiviral interferon-stimulated protein that plays a role in innate immunity and in the suppression of viruses through different mechanisms. Plays a role in the late phase response of TLR-induced immune effector expression. During influenza infection, interacts with PB2, PB1, and PA to disrupt the formation of the viral RdRp complex. Inhibits zika virus by interacting with the capsid protein in the nucleolus and reducing its abundance through proteasomal degradation. Strong transcriptional coactivator. This Homo sapiens (Human) protein is SERTA domain-containing protein 3 (SERTAD3).